Here is a 347-residue protein sequence, read N- to C-terminus: Purine-rich element-binding protein gamma (347 aa).

Disordered regions lie at residues 1–34 (MERA…YPQA) and 133–169 (GHRQ…HPHS). Gly residues predominate over residues 9–24 (GGGGRGRGGKNVGGSG). A DNA-binding region spans residues 51 to 293 (AGGAAEIQEL…GIFLKVSEVR (243 aa)). Basic and acidic residues predominate over residues 134–146 (HRQEHGHSKEQGS). A phosphoserine mark is found at Ser-160, Ser-163, and Ser-339.

Belongs to the PUR DNA-binding protein family. Isoform 1 is expressed in testis and glioblastoma. Isoform 2 is expressed in fetal lung.

It localises to the nucleus. This Homo sapiens (Human) protein is Purine-rich element-binding protein gamma (PURG).